Consider the following 261-residue polypeptide: Cytosolic Fe-S cluster assembly factor Nubp2 homolog (261 aa).

14–21 provides a ligand contact to ATP; sequence GKGGVGKS. Positions 188 and 191 each coordinate [4Fe-4S] cluster.

This sequence belongs to the Mrp/NBP35 ATP-binding proteins family. NUBP2/CFD1 subfamily. In terms of assembly, heterotetramer of 2 Nubp1 and 2 Nubp2 chains. [4Fe-4S] cluster is required as a cofactor.

The protein localises to the cytoplasm. Its function is as follows. Component of the cytosolic iron-sulfur (Fe/S) protein assembly (CIA) machinery. Required for maturation of extramitochondrial Fe-S proteins. The Nubp1-Nubp2 heterotetramer forms a Fe-S scaffold complex, mediating the de novo assembly of an Fe-S cluster and its transfer to target apoproteins. This is Cytosolic Fe-S cluster assembly factor Nubp2 homolog from Drosophila ananassae (Fruit fly).